The following is a 437-amino-acid chain: Glutamyl-tRNA reductase (437 aa).

Residues 49–52 (TCNR), Ser-109, 114–116 (EGQ), and Gln-120 contribute to the substrate site. Catalysis depends on Cys-50, which acts as the Nucleophile. Residue 198 to 203 (GAGRMS) participates in NADP(+) binding.

The protein belongs to the glutamyl-tRNA reductase family. In terms of assembly, homodimer.

It catalyses the reaction (S)-4-amino-5-oxopentanoate + tRNA(Glu) + NADP(+) = L-glutamyl-tRNA(Glu) + NADPH + H(+). The protein operates within porphyrin-containing compound metabolism; protoporphyrin-IX biosynthesis; 5-aminolevulinate from L-glutamyl-tRNA(Glu): step 1/2. It functions in the pathway porphyrin-containing compound metabolism; chlorophyll biosynthesis. In terms of biological role, catalyzes the NADPH-dependent reduction of glutamyl-tRNA(Glu) to glutamate 1-semialdehyde (GSA). The sequence is that of Glutamyl-tRNA reductase from Prochlorococcus marinus (strain SARG / CCMP1375 / SS120).